Consider the following 375-residue polypeptide: MKYAAFLPTIGALVSQAIAIGVQGTAEGFASSVTGGGSATPVYPSTTDELVSYLGDSEARVIVLTKTFDFTGTEGTTTATGCAPWGTASGCQVAINKDNWCTNYQSSAPSVSVTYDNAGSLGITVNSNKSLIGEGTSGVIKGKGLRIVSGAKNIIIQNIAITDINPKYVWGGDAITINQADLVWVDHVTTARIGRQHYVLGTEASNRITLSNNYIDGESDYSATCDNHHYWNIYLDGSSDKVTLKGNYLYKTSGRAPKVQGNTYLHAVNNYWNDNSNHAFEIGDGAYVLAEGNLFSDVTAAVESSSFTGELFGSASASSTCQSYIGRDCVANSFSSSGTLSGSNVDVLSKFKGETVASASAAGTSPASSAGQGHL.

Residues 1–19 form the signal peptide; sequence MKYAAFLPTIGALVSQAIA. 2 disulfide bridges follow: Cys-82-Cys-101 and Cys-91-Cys-225. Asn-128 is a glycosylation site (N-linked (GlcNAc...) asparagine). Arg-255 is an active-site residue. Cysteines 321 and 329 form a disulfide.

It belongs to the polysaccharide lyase 1 family.

It is found in the secreted. It carries out the reaction Eliminative cleavage of (1-&gt;4)-alpha-D-galacturonan methyl ester to give oligosaccharides with 4-deoxy-6-O-methyl-alpha-D-galact-4-enuronosyl groups at their non-reducing ends.. Its function is as follows. Pectinolytic enzymes consist of four classes of enzymes: pectin lyase, polygalacturonase, pectin methylesterase and rhamnogalacturonase. Among pectinolytic enzymes, pectin lyase is the most important in depolymerization of pectin, since it cleaves internal glycosidic bonds of highly methylated pectins. The protein is Probable pectin lyase B (pelB) of Aspergillus fumigatus (strain CBS 144.89 / FGSC A1163 / CEA10) (Neosartorya fumigata).